Consider the following 175-residue polypeptide: Cytochrome c homolog (175 aa).

At 1–8 (MSGKELNK) the chain is on the cytoplasmic side. The chain crosses the membrane as a helical; Signal-anchor span at residues 9–29 (IVAAILFASLIAMMVGFVANI). The Periplasmic portion of the chain corresponds to 30–175 (LYKPTLELQH…LFLKTYVHDK (146 aa)). The heme c site is built by cysteine 84, cysteine 87, histidine 88, and methionine 150.

Belongs to the cytochrome c family. In terms of processing, binds 1 heme c group covalently per subunit.

Its subcellular location is the cell membrane. Functionally, may be involved in electron transfer from bc1 complex to aa3. The protein is Cytochrome c homolog (cycM) of Rickettsia conorii (strain ATCC VR-613 / Malish 7).